A 1683-amino-acid polypeptide reads, in one-letter code: Genome polyprotein (1683 aa).

The Extracellular portion of the chain corresponds to M1 to G445. Intrachain disulfides connect C3–C30, C60–C121, C74–C105, and C92–C116. N67 carries an N-linked (GlcNAc...) asparagine; by host glycan. Residues D98–G111 are fusion peptide. N153 is a glycosylation site (N-linked (GlcNAc...) asparagine; by host). Cystine bridges form between C185–C285 and C302–C333. A helical membrane pass occupies residues A446–I466. Over G467–S472 the chain is Cytoplasmic. The chain crosses the membrane as a helical span at residues T473–V493. Residues Q494–I915 are Extracellular-facing. Disulfide bonds link C499-C510, C550-C638, C674-C718, C775-C824, C786-C808, and C807-C811. N702 carries N-linked (GlcNAc...) asparagine; by host glycosylation. The chain crosses the membrane as a helical span at residues G916 to L940. At R941–K946 the chain is on the cytoplasmic side. The helical transmembrane segment at E947–E965 threads the bilayer. Topologically, residues T966–K989 are lumenal. A helical transmembrane segment spans residues Y990–N1010. A1011 is a topological domain (cytoplasmic). The helical transmembrane segment at W1012–T1030 threads the bilayer. The Lumenal portion of the chain corresponds to S1031–D1037. The helical transmembrane segment at W1038–L1058 threads the bilayer. The Cytoplasmic portion of the chain corresponds to S1059–K1683. Positions A1066–I1243 constitute a Peptidase S7 domain. Residues H1116, D1140, and S1200 each act as charge relay system; for serine protease NS3 activity in the active site. The 157-residue stretch at D1245–E1401 folds into the Helicase ATP-binding domain. The important for RNA-binding stretch occupies residues R1249–R1252. L1258 to T1265 is a binding site for ATP. Positions D1349 to H1352 match the DEAH box motif. The Helicase C-terminal domain occupies S1411–D1582.

In terms of assembly, capsid protein C: Homodimer. Interacts (via N-terminus) with host EXOC1 (via C-terminus); this interaction results in EXOC1 degradation through the proteasome degradation pathway. Protein prM: Forms heterodimers with envelope protein E in the endoplasmic reticulum and Golgi. Homodimer; in the endoplasmic reticulum and Golgi. Interacts with protein prM. Interacts with non-structural protein 1. As to quaternary structure, homodimer; Homohexamer when secreted. Interacts with envelope protein E. In terms of assembly, interacts (via N-terminus) with serine protease NS3. Non-structural protein 2B: Forms a heterodimer with serine protease NS3. May form homooligomers. Forms a heterodimer with NS2B. Interacts with NS4B. Interacts with unphosphorylated RNA-directed RNA polymerase NS5; this interaction stimulates RNA-directed RNA polymerase NS5 guanylyltransferase activity. Interacts with host SHFL. Post-translationally, specific enzymatic cleavages in vivo yield mature proteins. Cleavages in the lumen of endoplasmic reticulum are performed by host signal peptidase, wereas cleavages in the cytoplasmic side are performed by the Serine protease NS3. Signal cleavage at the 2K-4B site requires a prior NS3 protease-mediated cleavage at the 4A-2K site. N-glycosylated. The excreted form is glycosylated and this is required for efficient secretion of the protein from infected cells. In terms of processing, N-glycosylated. Post-translationally, specific enzymatic cleavages in vivo yield mature proteins. Cleavages in the lumen of endoplasmic reticulum are performed by host signal peptidase, wereas cleavages in the cytoplasmic side are performed by serine protease NS3. Signal cleavage at the 2K-4B site requires a prior NS3 protease-mediated cleavage at the 4A-2K site.

It localises to the virion membrane. The protein resides in the host endoplasmic reticulum membrane. The protein localises to the secreted. The enzyme catalyses Selective hydrolysis of -Xaa-Xaa-|-Yaa- bonds in which each of the Xaa can be either Arg or Lys and Yaa can be either Ser or Ala.. It carries out the reaction a ribonucleoside 5'-triphosphate + H2O = a ribonucleoside 5'-diphosphate + phosphate + H(+). It catalyses the reaction ATP + H2O = ADP + phosphate + H(+). Its function is as follows. Binds to host cell surface receptor and mediates fusion between viral and cellular membranes. Envelope protein is synthesized in the endoplasmic reticulum in the form of heterodimer with protein prM. They play a role in virion budding in the ER, and the newly formed immature particle is covered with 60 spikes composed of heterodimer between precursor prM and envelope protein E. The virion is transported to the Golgi apparatus where the low pH causes dissociation of PrM-E heterodimers and formation of E homodimers. prM-E cleavage is inefficient, and many virions are only partially matured. These uncleaved prM would play a role in immune evasion. Involved in immune evasion, pathogenesis and viral replication. Once cleaved off the polyprotein, is targeted to three destinations: the viral replication cycle, the plasma membrane and the extracellular compartment. Essential for viral replication. Required for formation of the replication complex and recruitment of other non-structural proteins to the ER-derived membrane structures. Excreted as a hexameric lipoparticle that plays a role against host immune response. Antagonizing the complement function. Binds to the host macrophages and dendritic cells. Inhibits signal transduction originating from Toll-like receptor 3 (TLR3). Functionally, disrupts the host endothelial glycocalyx layer of host pulmonary microvascular endothelial cells, inducing degradation of sialic acid and shedding of heparan sulfate proteoglycans. NS1 induces expression of sialidases, heparanase, and activates cathepsin L, which activates heparanase via enzymatic cleavage. These effects are probably linked to the endothelial hyperpermeability observed in severe dengue disease. In terms of biological role, component of the viral RNA replication complex that functions in virion assembly and antagonizes the host immune response. Its function is as follows. Serine protease subunit NS2B: Required cofactor for the serine protease function of NS3. May have membrane-destabilizing activity and form viroporins. Displays three enzymatic activities: serine protease, NTPase and RNA helicase. NS3 serine protease, in association with NS2B, performs its autocleavage and cleaves the polyprotein at dibasic sites in the cytoplasm: C-prM, NS2A-NS2B, NS2B-NS3, NS3-NS4A, NS4A-2K and NS4B-NS5. NS3 RNA helicase binds RNA and unwinds dsRNA in the 3' to 5' direction. The protein is Genome polyprotein of Aedimorphus (Red guenon).